Consider the following 143-residue polypeptide: Large ribosomal subunit protein uL13 (143 aa).

Belongs to the universal ribosomal protein uL13 family. As to quaternary structure, part of the 50S ribosomal subunit.

Its function is as follows. This protein is one of the early assembly proteins of the 50S ribosomal subunit, although it is not seen to bind rRNA by itself. It is important during the early stages of 50S assembly. In Albidiferax ferrireducens (strain ATCC BAA-621 / DSM 15236 / T118) (Rhodoferax ferrireducens), this protein is Large ribosomal subunit protein uL13.